A 500-amino-acid chain; its full sequence is Melanopsin-like (500 aa).

The Extracellular portion of the chain corresponds to 1 to 65 (MSHHSSWRGH…TVDVPDHAHY (65 aa)). An N-linked (GlcNAc...) asparagine glycan is attached at asparagine 18. The chain crosses the membrane as a helical span at residues 66–86 (IIGSVILIVGITGVIGNALVV). Over 87–101 (YVFCRSRTLRTAGNM) the chain is Cytoplasmic. Residues 102-122 (FIVNLAVADFLMSVTQSPVFF) form a helical membrane-spanning segment. Residues 123–138 (AASLHRRWVFGERPCE) lie on the Extracellular side of the membrane. Cysteines 137 and 215 form a disulfide. Residues 139–159 (LYAFCGALFGICSMMTLTAIA) traverse the membrane as a helical segment. The Cytoplasmic portion of the chain corresponds to 160-182 (ADRCLAITQPLALVSRVSRRKAG). Residues 183–203 (AVLVVVWLYSLGWSLPPFFGW) form a helical membrane-spanning segment. Residues 204-232 (SAYVPEGLQTSCSWDYMTFTPSVRAYTIL) lie on the Extracellular side of the membrane. A helical membrane pass occupies residues 233-253 (LFVFVFFIPLGIIGSCYFAIF). At 254 to 286 (QTIRAAGKEIRELDCGETHKVYERMQNEWKMAK) the chain is on the cytoplasmic side. A helical transmembrane segment spans residues 287-307 (VALVVIVLFIISWSPYSVVAL). The Extracellular portion of the chain corresponds to 308–322 (TATAGYSHFLTPYMN). The chain crosses the membrane as a helical span at residues 323–343 (SVPAVIAKASAIHNPIIYAIT). Position 330 is an N6-(retinylidene)lysine (lysine 330). The Cytoplasmic portion of the chain corresponds to 344–500 (HPKYRVAIAR…SDGKALLGGN (157 aa)). The segment at 404–428 (RWGKTRLSSASDSDSCWTESEADGS) is disordered. Polar residues predominate over residues 409 to 428 (RLSSASDSDSCWTESEADGS).

Belongs to the G-protein coupled receptor 1 family. Opsin subfamily. Expressed in a subset of retinal horizontal cells.

The protein resides in the cell membrane. Photoreceptor implicated in non-image-forming responses to light. The protein is Melanopsin-like (opn4l) of Danio rerio (Zebrafish).